The sequence spans 413 residues: uncharacterized protein (413 aa).

The Response regulatory domain occupies 2–129 (RILIVDDENT…KTTWKLRLME (128 aa)). A 4-aspartylphosphate modification is found at Asp-54.

This is an uncharacterized protein from Sinorhizobium fredii (strain NBRC 101917 / NGR234).